A 432-amino-acid polypeptide reads, in one-letter code: Transcriptional adapter 3-A (432 aa).

Disordered regions lie at residues 90–127 (HELG…RNMQ) and 275–314 (SPVE…TKSL). The span at 293 to 305 (DGASTSPRSQNKP) shows a compositional bias: polar residues. The stretch at 335–398 (ADDSEDEVLA…NEVMDAFRKI (64 aa)) forms a coiled coil.

It belongs to the NGG1 family.

It is found in the nucleus. In terms of biological role, functions as a component of the PCAF complex. The PCAF complex is capable of efficiently acetylating histones in a nucleosomal context. This Xenopus laevis (African clawed frog) protein is Transcriptional adapter 3-A (tada3-a).